Consider the following 89-residue polypeptide: Small ribosomal subunit protein uS15 (89 aa).

The protein belongs to the universal ribosomal protein uS15 family. In terms of assembly, part of the 30S ribosomal subunit. Forms a bridge to the 50S subunit in the 70S ribosome, contacting the 23S rRNA.

Its function is as follows. One of the primary rRNA binding proteins, it binds directly to 16S rRNA where it helps nucleate assembly of the platform of the 30S subunit by binding and bridging several RNA helices of the 16S rRNA. Forms an intersubunit bridge (bridge B4) with the 23S rRNA of the 50S subunit in the ribosome. The protein is Small ribosomal subunit protein uS15 of Corynebacterium kroppenstedtii (strain DSM 44385 / JCM 11950 / CIP 105744 / CCUG 35717).